Here is a 382-residue protein sequence, read N- to C-terminus: ATP phosphoribosyltransferase regulatory subunit (382 aa).

This sequence belongs to the class-II aminoacyl-tRNA synthetase family. HisZ subfamily. Heteromultimer composed of HisG and HisZ subunits.

Its subcellular location is the cytoplasm. It participates in amino-acid biosynthesis; L-histidine biosynthesis; L-histidine from 5-phospho-alpha-D-ribose 1-diphosphate: step 1/9. Its function is as follows. Required for the first step of histidine biosynthesis. May allow the feedback regulation of ATP phosphoribosyltransferase activity by histidine. The chain is ATP phosphoribosyltransferase regulatory subunit from Burkholderia pseudomallei (strain K96243).